The primary structure comprises 2392 residues: MKQKLLENKFSYRKFKLEEIKKYEYLLNSCINWNLIKLVTGIPSNREHLIKLFDLRILSSLILRDLRKSEMKKSLILKSFPLLILSMFIHRMNSRNIVEINNCHLERIIYGGINYREGRDEISRRYLHSFMKNFSIPLNYPFSTKKGRERYTNNLLRQKKHIWVFKRNLLGKKYIKPVYDKIDFYNFEEWKTLIIKEILPSWKISNQSIDKANILLEDKNIEDLKHFFELYVDDIIRRDYHWKNSLDIISYRDRKNQVNFNLKNNLEFLDKKLFYCLISAFCEKVLSEVEGPFKHKRIKSTFNLKNIEDFSDFEVTNKEIFKWELHWWKKKIFQFLDKNHESDQSIAKSFTFFQNKRFLFLENYAEFYTWLLYEDSPFHLKKNKQLLDTAKDTFKEDSFQLNDRRNQIYSFENKGIFLNILHNFSIYVSNKVRKLNHLKIFSDISIKNSYLINKNLVYHGKGSGGTIYEDEKQKTWDTTDFYLKREKYFISKTDFLSRSIEKKCFKSNKYFLDLFLNRGDTNKRSTTESNIHSYDLSSLTKAKRKEVKSGSSYEFLEKDSFFFLMKENFVKDFKSITKDFFSNREKKMTDYFPKLINYAFLDISSIDESNMSFHITGRHLKDFPLNEWRTNIPSRNYMLSDISRMINLSKIRKKFQNVFFVSSISSKRIRQNKNSNDFYLISLIKLNLSWNRPYLCWSTLYKCNKQYIFNRYLKLKERFMRGVEQLNLLITKPNQNYDKILYFQVESEIGKFHKSKENELNYNFFFPLLNGINEDDKFLNEMFHKKVEAHSEENFETYIYPTNHRKKLKLWYELNKGSYICLDNVVKKYYSIYKLKFYLINRMKKLWVERIENGNSSNFIRNIVNGHSSNWKINGREWSDYNIKRDKYINWNSYIYKWFDRTKNLQIFPNWFSDNTSRRWFNEIRFIKPDIFMTYPKKLEKNYYSKVYFIFNTSSNSLLESISKKKNINLRGRVLHNYKKLSRDSEKLIKNKLLPESFLNKNLIKNIIISLFNNEKNHDIFREFPRKTFSLWIYKNRNNGFNSINNFQKNLMMNFHNTNTIEFLDYLHDFHFRYDKRLPFFMKEIHIKNYDSTYNKFLRILPIYSNLRSLSINKIKPFFFQSRIDITLSIQLQVFNDSLSNYLGRTCNYIFTSFTNHLYKLLNLLIKINSSIYKETDSCSIQKFLAMTPSGPTILNLKITHYDEFFLGELTSNFNGYFEFSSEPNLSHTEIQSYKNELLSEFLIEFRNKNNRKLQWIKESFLKLNLKENFKYVIGGESIDRISINLDFYEKNKNILPYPSLSITDFFDKDDKIKVSKKLYFLEKWNFFQNYTSWFFTFEWWRYFSNIPLETFPEVLLNITDQSKYISYKTTQYIEEILKDLWKNLNFIFQTNILRKININSEIRLLKQINNEQHESIFIYIWSHFQFINLSNAIYLTLISLSVSCFLVSENYFSTLIGLDYIDSWRRFKVIEYLRDPLRGSYLVERWIYGNQTQIIRTENFFMLLLKNFIHYIKNGRFFLFTRKKLDTWLFHSRTLDLSRRKKDLLVKSVITERSLSQYRLNLNLNHNLRNYDFGYKISEKPGFYYLRYLAETYQKDLVNHSFYSSHLAEKWILLAFWKGMISSQKLWQTKILNHESYRIPIPFELDLFSSKGILLVGPTEIGKSYLIKNLAADSYVPLIKISISKLLYNKPDVITESWINILMESLQRLTLILELAKKMSPCIIWIQDIHELNVNRSTENVESDPTFLLGILLKYFHTEFISKSTKGIIIIGSTHLPRKVDPALISPNRLDKLMNIRIIDIFERQEKFSILLHSKRFYFKNKLLHFNEFAYRTMGYNGRDLVALANEVSLINTTQGNSTIYIDAVRLALHRQTLGFTYINNQMLFCQNEGVLLHKIGKAVIQNIFIKIFPMNPLYIGSDLWKKKFYYLSEWFLEPSVTEPTIKELTLLSYILGCLAGLAAGDSWSILEHEPENLIPLNKFIENDFDLACGISESFLVEFSWLEIFQDESINNEIEFFPKIGARHFLNMMQRGISSTTSGKFMYKQDGLRNRSIFKKTVQYKEKLYELASETTWAPKIWRLSFIRTKSFDWIGRPNDFESLYSFWFLREKEQTFSVSENSREIFHSSQVAQYKTKEELPYERILSRIRRRNVEELESQLGFILSEDQFKILGFPELSTQYRIEYELFQKPMLFMGGRFIWDPTSLSFETRYSVFSRRELFIDEEMRRRLYVTYGARRERERSRSSQKIKQFFLRCGYGRDFMNNSSIGWWNGLFLTEKYNIEIFKRIEEISVQLKHPEVFTPVYLYQSWLIENSREKLSRFDLLNHRERWIKLNNKSFHYFSIHSTLLESYNYLLNFFISNRILLDEMTKMLLKDGWLFQNEIEHFICKMKK.

1658–1665 contacts ATP; the sequence is GPTEIGKS.

Belongs to the Ycf2 family.

Its subcellular location is the plastid. It localises to the chloroplast stroma. Probable ATPase of unknown function. Its presence in a non-photosynthetic plant (Epifagus virginiana) and experiments in tobacco indicate that it has an essential function which is probably not related to photosynthesis. This Anthoceros angustus (Hornwort) protein is Protein Ycf2.